The sequence spans 64 residues: Large ribosomal subunit protein bL32 (64 aa).

Residues 1 to 28 (MAVQKSRVTPSRRGQRRSHDALTAKKLS) are disordered.

The protein belongs to the bacterial ribosomal protein bL32 family.

This is Large ribosomal subunit protein bL32 (rpmF) from Xylella fastidiosa (strain 9a5c).